A 475-amino-acid polypeptide reads, in one-letter code: Sulfate adenylyltransferase subunit 1 (475 aa).

A tr-type G domain is found at 25 to 239 (KSLLRFLTCG…EVLETVEIQR (215 aa)). Positions 34 to 41 (GSVDDGKS) are G1. Residue 34–41 (GSVDDGKS) participates in GTP binding. The tract at residues 92-96 (GITID) is G2. The G3 stretch occupies residues 113 to 116 (DTPG). GTP is bound by residues 113–117 (DTPGH) and 168–171 (NKMD). Residues 168-171 (NKMD) are G4. The interval 206–208 (SAL) is G5.

This sequence belongs to the TRAFAC class translation factor GTPase superfamily. Classic translation factor GTPase family. CysN/NodQ subfamily. Heterodimer composed of CysD, the smaller subunit, and CysN.

It carries out the reaction sulfate + ATP + H(+) = adenosine 5'-phosphosulfate + diphosphate. Its pathway is sulfur metabolism; hydrogen sulfide biosynthesis; sulfite from sulfate: step 1/3. With CysD forms the ATP sulfurylase (ATPS) that catalyzes the adenylation of sulfate producing adenosine 5'-phosphosulfate (APS) and diphosphate, the first enzymatic step in sulfur assimilation pathway. APS synthesis involves the formation of a high-energy phosphoric-sulfuric acid anhydride bond driven by GTP hydrolysis by CysN coupled to ATP hydrolysis by CysD. In Escherichia coli O127:H6 (strain E2348/69 / EPEC), this protein is Sulfate adenylyltransferase subunit 1.